The chain runs to 1247 residues: Structural polyprotein (1247 aa).

The tract at residues 36–67 (RPAGQLAQLISAVSRLALRTVPQKPRRTRKIK) is host transcription inhibition. The interval 53–103 (LRTVPQKPRRTRKIKKQKQVKQEQQSTRNQKKKAPKQKQTQKKKRPGRRER) is disordered. Composition is skewed to basic residues over residues 59–71 (KPRRTRKIKKQKQ) and 81–100 (NQKKKAPKQKQTQKKKRPGR). The Nuclear localization signal motif lies at 60 to 98 (PRRTRKIKKQKQVKQEQQSTRNQKKKAPKQKQTQKKKRP). The binding to the viral RNA stretch occupies residues 83–113 (KKKAPKQKQTQKKKRPGRRERMCMKIENDCI). Positions 98–112 (PGRRERMCMKIENDC) are ribosome-binding. An intrachain disulfide couples Cys112 to Cys127. The 149-residue stretch at 112–260 (CIFEVKHEGK…KITPEGSVEW (149 aa)) folds into the Peptidase S3 domain. The active-site Charge relay system is the His138. The Nuclear export signal signature appears at 143-153 (IDNADLAKLAF). Positions 154–159 (KRSSKY) are interaction with spike glycoprotein E2. Catalysis depends on Asp160, which acts as the Charge relay system. The tract at residues 182-192 (PEGYYNWHHGA) is dimerization of the capsid protein. Ser212 functions as the Charge relay system in the catalytic mechanism. A dimerization of the capsid protein region spans residues 218 to 222 (DNKGR). The tract at residues 261 to 273 (SLALPVMCLLANT) is functions as an uncleaved signal peptide for the precursor of protein E3/E2. 9 cysteine pairs are disulfide-bonded: Cys268-Cys277, Cys282-Cys286, Cys285-Cys317, Cys343-Cys449, Cys346-Cys352, Cys415-Cys429, Cys477-Cys590, Cys525-Cys549, and Cys527-Cys544. Asn272 is a glycosylation site (N-linked (GlcNAc...) asparagine; by host). Residues 325–691 (NARENFNVYK…YYYELYPTTT (367 aa)) are Extracellular-facing. The N-linked (GlcNAc...) asparagine; by host glycan is linked to Asn587. A helical membrane pass occupies residues 692-712 (IAVLAAASIVVASLVGLSLGM). The Cytoplasmic portion of the chain corresponds to 713–747 (CICARRRCITPYELTPGATIPFLLGILCCVKTAKA). An interaction with the capsid protein region spans residues 715–719 (CARRR). 3 S-palmitoyl cysteine; by host lipidation sites follow: Cys720, Cys740, and Cys741. The tract at residues 720-740 (CITPYELTPGATIPFLLGILC) is transient transmembrane before p62-6K protein processing. A disulfide bond links Cys720 and Cys741. Residues 748–762 (ASYYEAATYLWNEQQ) lie on the Extracellular side of the membrane. Residues 763-783 (PLFWLQLLIPLSAAIVVCNCL) traverse the membrane as a helical segment. Topologically, residues 784–787 (KLLP) are cytoplasmic. A helical membrane pass occupies residues 788-808 (CCCKTLTFLAVMSIGARTVSA). Residues 809–1223 (YEHATVIPNT…AMSWVQKITG (415 aa)) are Extracellular-facing. 4 disulfides stabilise this stretch: Cys857–Cys922, Cys870–Cys902, Cys871–Cys904, and Cys876–Cys886. The segment at 892–909 (VYPFMWGGAYCFCDAENT) is E1 fusion peptide loop. 2 N-linked (GlcNAc...) asparagine; by host glycosylation sites follow: Asn949 and Asn1078. 4 cysteine pairs are disulfide-bonded: Cys1067–Cys1079, Cys1109–Cys1184, Cys1114–Cys1188, and Cys1136–Cys1178. Residues 1224-1244 (GVGLVVAIAALILIIVLCVSF) traverse the membrane as a helical segment. Residue Cys1241 is the site of S-palmitoyl cysteine; by host attachment. Residues 1245–1247 (SRH) lie on the Cytoplasmic side of the membrane.

In terms of assembly, homodimer. Homomultimer. Interacts with host karyopherin KPNA4; this interaction allows the nuclear import of the viral capsid protein. Interacts with spike glycoprotein E2. Interacts with host IRAK1; the interaction leads to inhibition of IRAK1-dependent signaling. As to quaternary structure, the precursor of protein E3/E2 and E1 form a heterodimer shortly after synthesis. The precursor of protein E3/E2 and E1 form a heterodimer shortly after synthesis. Processing of the precursor of protein E3/E2 into E2 and E3 results in a heterodimer of the spike glycoproteins E2 and E1. Spike at virion surface are constituted of three E2-E1 heterodimers. After target cell attachment and endocytosis, E1 change conformation to form homotrimers. Interacts with 6K protein. In terms of assembly, interacts with spike glycoprotein E1. Processing of the precursor of protein E3/E2 into E2 and E3 results in a heterodimer of the spike glycoproteins E2 and E1. Spike at virion surface are constituted of a trimer of E2-E1 heterodimers. Interacts with 6K protein. Interacts with host MXRA8; this interaction mediates virus entry. As to quaternary structure, oligomer. Interacts with spike glycoprotein E1. Interacts with spike glycoprotein E2. Post-translationally, structural polyprotein: Specific enzymatic cleavages in vivo yield mature proteins. Capsid protein is auto-cleaved during polyprotein translation, unmasking a signal peptide at the N-terminus of the precursor of E3/E2. The remaining polyprotein is then targeted to the host endoplasmic reticulum, where host signal peptidase cleaves it into pE2, 6K and E1 proteins. pE2 is further processed to mature E3 and E2 by host furin in trans-Golgi vesicle. In terms of processing, palmitoylated via thioester bonds. These palmitoylations may induce disruption of the C-terminus transmembrane. This would result in the reorientation of E2 C-terminus from lumenal to cytoplasmic side. N-glycosylated. Post-translationally, palmitoylated via thioester bonds.

The protein localises to the virion. It is found in the host cytoplasm. Its subcellular location is the host cell membrane. The protein resides in the host nucleus. It localises to the virion membrane. The protein localises to the host Golgi apparatus. It is found in the host trans-Golgi network. Its subcellular location is the host endoplasmic reticulum. It catalyses the reaction Autocatalytic release of the core protein from the N-terminus of the togavirus structural polyprotein by hydrolysis of a -Trp-|-Ser- bond.. Forms an icosahedral capsid with a T=4 symmetry composed of 240 copies of the capsid protein surrounded by a lipid membrane through which penetrate 80 spikes composed of trimers of E1-E2 heterodimers. The capsid protein binds to the viral RNA genome at a site adjacent to a ribosome binding site for viral genome translation following genome release. Possesses a protease activity that results in its autocatalytic cleavage from the nascent structural protein. Following its self-cleavage, the capsid protein transiently associates with ribosomes, and within several minutes the protein binds to viral RNA and rapidly assembles into icosahedric core particles. The resulting nucleocapsid eventually associates with the cytoplasmic domain of the spike glycoprotein E2 at the cell membrane, leading to budding and formation of mature virions. In case of infection, new virions attach to target cells and after clathrin-mediated endocytosis their membrane fuses with the host endosomal membrane. This leads to the release of the nucleocapsid into the cytoplasm, followed by an uncoating event necessary for the genomic RNA to become accessible. The uncoating might be triggered by the interaction of capsid proteins with ribosomes. Binding of ribosomes would release the genomic RNA since the same region is genomic RNA-binding and ribosome-binding. Specifically inhibits interleukin-1 receptor-associated kinase 1/IRAK1-dependent signaling during viral entry, representing a means by which the alphaviruses may evade innate immune detection and activation prior to viral gene expression. Its function is as follows. Provides the signal sequence for the translocation of the precursor of protein E3/E2 to the host endoplasmic reticulum. Furin-cleaved E3 remains associated with spike glycoprotein E1 and mediates pH protection of the latter during the transport via the secretory pathway. After virion release from the host cell, the assembly protein E3 is gradually released in the extracellular space. In terms of biological role, plays a role in viral attachment to target host cell, by binding to the cell receptor MXRA8. Synthesized as a p62 precursor which is processed by furin at the cell membrane just before virion budding, giving rise to E2-E1 heterodimer. The p62-E1 heterodimer is stable, whereas E2-E1 is unstable and dissociate at low pH. p62 is processed at the last step, presumably to avoid E1 fusion activation before its final export to cell surface. E2 C-terminus contains a transitory transmembrane that would be disrupted by palmitoylation, resulting in reorientation of the C-terminal tail from lumenal to cytoplasmic side. This step is critical since E2 C-terminus is involved in budding by interacting with capsid proteins. This release of E2 C-terminus in cytoplasm occurs lately in protein export, and precludes premature assembly of particles at the endoplasmic reticulum membrane. Functionally, acts as a viroporin that participates in virus glycoprotein processing and transport to the plasma membrane, cell permeabilization and budding of viral particles. Disrupts the calcium homeostasis of the cell, probably at the endoplasmic reticulum level. This leads to cytoplasmic calcium elevation. Because of its lipophilic properties, the 6K protein is postulated to influence the selection of lipids that interact with the transmembrane domains of the glycoproteins, which, in turn, affects the deformability of the bilayer required for the extreme curvature that occurs as budding proceeds. Present in low amount in virions, about 3% compared to viral glycoproteins. Class II viral fusion protein. Fusion activity is inactive as long as E1 is bound to E2 in mature virion. After virus attachment to target cell via host MXRA8 and endocytosis, acidification of the endosome induce dissociation of E1/E2 heterodimer and concomitant trimerization of the E1 subunits. This E1 trimer is fusion active, and promotes release of viral nucleocapsid in cytoplasm after endosome and viral membrane fusion. Efficient fusion requires the presence of cholesterol and sphingolipid in the target membrane. This Anopheles (Human) protein is Structural polyprotein.